The sequence spans 2368 residues: Voltage-dependent P/Q-type calcium channel subunit alpha-1A (2368 aa).

Topologically, residues 1–100 (MARFGDEMPG…KYAKKITEWP (100 aa)) are cytoplasmic. The I repeat unit spans residues 65 to 365 (NPIPVRQNCL…LVLGVLSGEF (301 aa)). A helical membrane pass occupies residues 101 to 119 (PFEYMILATIIANCIVLAL). Residues 120 to 138 (EQHLPDDDKTPMSERLDDT) are Extracellular-facing. A helical transmembrane segment spans residues 139-156 (EPYFIGIFCFEAGIKIVA). Topologically, residues 157–168 (LGFAFHKGSYLR) are cytoplasmic. Residues 169–184 (NGWNVMDFVVVLTGIL) form a helical membrane-spanning segment. Residues 185–192 (ATVGTEFD) are Extracellular-facing. The chain crosses the membrane as a helical span at residues 193-211 (LRTLRAVRVLRPLKLVSGI). Over 212–230 (PSLQVVLKSIMKAMIPLLQ) the chain is Cytoplasmic. Residues 231–250 (IGLLLFFAILIFAIIGLEFY) traverse the membrane as a helical segment. The Extracellular portion of the chain corresponds to 251–337 (MGKFHTTCFE…NSNDASGNTW (87 aa)). Residue N285 is glycosylated (N-linked (GlcNAc...) asparagine). A Ca(2+)-binding site is contributed by E320. Residues 338–362 (NWLYFIPLIIIGSFFMLNLVLGVLS) traverse the membrane as a helical segment. The Cytoplasmic portion of the chain corresponds to 363-489 (GEFAKERERV…FYIRRMVKTQ (127 aa)). Residues 385–402 (QQIERELNGYMEWISKAE) form a binding to the beta subunit region. At T411 the chain carries Phosphothreonine. Phosphoserine is present on residues S450 and S453. Residues 475-719 (ERRMRFYIRR…VFLAIAVDNL (245 aa)) form an II repeat. Residues 490-509 (AFYWTVLSLVALNTLCVAIV) traverse the membrane as a helical segment. The Extracellular portion of the chain corresponds to 510–523 (HYNQPEWLSDFLYY). Residues 524–543 (AEFIFLGLFMSEMFIKMYGL) form a helical membrane-spanning segment. Over 544 to 551 (GTRPYFHS) the chain is Cytoplasmic. The helical transmembrane segment at 552–570 (SFNCFDCGVIIGSIFEVIW) threads the bilayer. Residues 571 to 580 (AVIKPGTSFG) lie on the Extracellular side of the membrane. A helical transmembrane segment spans residues 581–599 (ISVLRALRLLRIFKVTKYW). Topologically, residues 600-618 (ASLRNLVVSLLNSMKSIIS) are cytoplasmic. Residues 619–638 (LLFLLFLFIVVFALLGMQLF) form a helical membrane-spanning segment. The Extracellular segment spans residues 639-691 (GGQFNFDEGTPPTNFDTFPAAIMTVFQILTGEDWNEVMYDGIKSQGGVQGGMV). E670 provides a ligand contact to Ca(2+). A helical membrane pass occupies residues 692-716 (FSIYFIVLTLFGNYTLLNVFLAIAV). Residues 717–1190 (DNLANAQELT…TNPLRRLCHY (474 aa)) are Cytoplasmic-facing. A phosphoserine mark is found at S752 and S755. Residues 762–781 (AVKEQQKNQKPTKSVWEQRT) are disordered. The span at 769-779 (NQKPTKSVWEQ) shows a compositional bias: polar residues. Phosphoserine is present on S792. 2 disordered regions span residues 823 to 1117 (PLVV…RKPE) and 1137 to 1170 (VNKN…KPMP). Composition is skewed to basic and acidic residues over residues 850 to 862 (RPRE…DARR), 871 to 924 (APGR…EGEP), and 932 to 958 (RPGD…RAAD). 3 positions are modified to phosphoserine: S1038, S1042, and S1051. Polar residues predominate over residues 1056–1073 (GNSTNPGPALATNPQNAA). Residues 1074-1083 (SRRTPNNPGN) are compositionally biased toward low complexity. Residues 1094–1111 (ENSLIVTNPSSTQPNSAK) show a composition bias toward polar residues. A compositionally biased stretch (acidic residues) spans 1153-1163 (KKEEEEADPGE). Residues 1182-1465 (NPLRRLCHYI…IFVALIIITF (284 aa)) form an III repeat. The chain crosses the membrane as a helical span at residues 1191–1214 (ILNLRYFEMCILMVIAMSSIALAA). The Extracellular segment spans residues 1215-1231 (EDPVQPNAPRNNVLRYF). A helical membrane pass occupies residues 1232–1251 (DYVFTGVFTFEMVIKMIDLG). The Cytoplasmic segment spans residues 1252–1258 (LVLHQGA). A helical membrane pass occupies residues 1259–1282 (YFRDLWNILDFIVVSGALVAFAFT). Residues 1283 to 1293 (GNSKGKDINTI) lie on the Extracellular side of the membrane. The helical transmembrane segment at 1294–1311 (KSLRVLRVLRPLKTIKRL) threads the bilayer. Residues 1312–1330 (PKLKAVFDCVVNSLKNVFN) lie on the Cytoplasmic side of the membrane. The chain crosses the membrane as a helical span at residues 1331-1350 (ILIVYMLFMFIFAVVAVQLF). At 1351–1437 (KGKFFHCTDE…QGPSPGYRME (87 aa)) the chain is on the extracellular side. E1411 serves as a coordination point for Ca(2+). A helical membrane pass occupies residues 1438–1462 (MSIFYVVYFVVFPFFFVNIFVALII). Residues 1463-1518 (ITFQEQGDKMMEEYSLEKNERACIDFAISAKPLTRHMPQNKQSFQYRMWQFVVSPP) lie on the Cytoplasmic side of the membrane. An IV repeat occupies 1502 to 1765 (NKQSFQYRMW…LFVAVIMDNF (264 aa)). A helical transmembrane segment spans residues 1519 to 1537 (FEYTIMAMIALNTIVLMMK). Over 1538–1551 (FYGASVAYENALRV) the chain is Extracellular. A helical transmembrane segment spans residues 1552–1573 (FNIVFTSLFSLECVLKVMAFGI). Topologically, residues 1574-1580 (LNYFRDA) are cytoplasmic. A helical transmembrane segment spans residues 1581 to 1600 (WNIFDFVTVLGSITDILVTE). Residues 1601–1607 (FGNNFIN) lie on the Extracellular side of the membrane. An N-linked (GlcNAc...) asparagine glycan is attached at N1607. A helical transmembrane segment spans residues 1608–1626 (LSFLRLFRAARLIKLLRQG). At 1627–1645 (YTIRILLWTFVQSFKALPY) the chain is on the cytoplasmic side. A helical transmembrane segment spans residues 1646–1665 (VCLLIAMLFFIYAIIGMQVF). At 1666–1737 (GNIGIDGEDE…ILTADCGNEF (72 aa)) the chain is on the extracellular side. Residues 1738–1763 (AYFYFVSFIFLCSFLMLNLFVAVIMD) form a helical membrane-spanning segment. Over 1764 to 2368 (NFEYLTRDSS…AYSESEDDWC (605 aa)) the chain is Cytoplasmic. T1935 is subject to Phosphothreonine. A disordered region spans residues 1940–2368 (QRMEPPSPTQ…AYSESEDDWC (429 aa)). 2 stretches are compositionally biased toward polar residues: residues 1948–1963 (TQEG…STQL) and 1981–1997 (SWVT…TGTW). S1998, S2016, S2028, S2030, S2071, and S2091 each carry phosphoserine. Residues 2008–2017 (PNSQPNSQSV) are compositionally biased toward polar residues. Positions 2018–2034 (EMREMGTDGYSDSEHYL) are enriched in basic and acidic residues. Positions 2063-2073 (DLSTISDTSPM) are enriched in polar residues. Basic and acidic residues-rich tracts occupy residues 2085–2102 (RRLD…ENQR) and 2143–2153 (PSKDRDQDRGR). The span at 2154–2172 (PKDRKHRPHHHHHHHHHHP) shows a compositional bias: basic residues. Basic and acidic residues predominate over residues 2173-2209 (PAPDRDRYAQERPDTGRARAREQRWSRSPSEGREHTT). A compositionally biased stretch (low complexity) spans 2213 to 2231 (GSSSVSGSPAPSTSGTSTP). The segment covering 2289–2305 (EGPRPRGADYTEPDSPR) has biased composition (basic and acidic residues).

It belongs to the calcium channel alpha-1 subunit (TC 1.A.1.11) family. CACNA1A subfamily. Voltage-dependent calcium channels are multisubunit complexes, consisting of alpha-1, alpha-2, beta and delta subunits in a 1:1:1:1 ratio. The channel activity is directed by the pore-forming and voltage-sensitive alpha-1 subunit. In many cases, this subunit is sufficient to generate voltage-sensitive calcium channel activity. The auxiliary subunits beta and alpha-2/delta linked by a disulfide bridge regulate the channel activity. Interacts with CABP1. Interacts with the spider omega-agatoxin-IVA (AC P30288). Interacts with TSPOAP1. As to expression, brain specific; mainly found in the cerebellum, olfactory bulb, cerebral cortex, hippocampus, and inferior colliculus. In the hippocampus, expression occurs in pyramidal and granule neurons, as well as in interneurons. Purkinje cells contain predominantly P-type VSCC, the Q-type being a prominent calcium current in cerebellar granule cells.

It is found in the cell membrane. It carries out the reaction Ca(2+)(in) = Ca(2+)(out). Voltage-sensitive calcium channels (VSCC) mediate the entry of calcium ions into excitable cells and are also involved in a variety of calcium-dependent processes, including muscle contraction, hormone or neurotransmitter release, gene expression, cell motility, cell division and cell death. The isoform alpha-1A gives rise to P and/or Q-type calcium currents. P/Q-type calcium channels belong to the 'high-voltage activated' (HVA) group and are specifically blocked by the spider omega-agatoxin-IVA (AC P54282). They are however insensitive to dihydropyridines (DHP). The chain is Voltage-dependent P/Q-type calcium channel subunit alpha-1A from Mus musculus (Mouse).